We begin with the raw amino-acid sequence, 282 residues long: UDP-N-acetylenolpyruvoylglucosamine reductase (282 aa).

Residues 15–179 (IKSFAKYVYF…LSAEFEFEYK (165 aa)) enclose the FAD-binding PCMH-type domain. Arginine 157 is an active-site residue. Catalysis depends on serine 207, which acts as the Proton donor. Glutamate 278 is an active-site residue.

Belongs to the MurB family. Requires FAD as cofactor.

It localises to the cytoplasm. The catalysed reaction is UDP-N-acetyl-alpha-D-muramate + NADP(+) = UDP-N-acetyl-3-O-(1-carboxyvinyl)-alpha-D-glucosamine + NADPH + H(+). Its pathway is cell wall biogenesis; peptidoglycan biosynthesis. Cell wall formation. The chain is UDP-N-acetylenolpyruvoylglucosamine reductase from Francisella tularensis subsp. tularensis (strain SCHU S4 / Schu 4).